We begin with the raw amino-acid sequence, 227 residues long: MGNCVGRQRRERPTAPGHPRKRAGRNEPLKKERLKWKSDYPMTDGQLRSKRDEFWDTAPAFEGRKEIWDALKAAAYAAEANDHELAQAILDGASITLPHGTLCECYDELGNRYQLPIYCLSPPVNLLLEHTEEESLEPPEPTPSVRREFPLKVRLSTGKDVRLSASLPDTVGQLKRQLHTQEGIEPSWQRWFFSGKLLTDRTRLQETKIQKDFVIQVIINQPPPPQD.

Residues 1–36 (MGNCVGRQRRERPTAPGHPRKRAGRNEPLKKERLKW) form a disordered region. Positions 24-36 (GRNEPLKKERLKW) are enriched in basic and acidic residues. Residues 149 to 224 (FPLKVRLSTG…IQVIINQPPP (76 aa)) form the Ubiquitin-like domain.

Interacts with UBTD1.

May be involved in the regulation of cellular senescence through a positive feedback loop with TP53. Is a TP53 downstream target gene that increases the stability of TP53 protein by promoting the ubiquitination and degradation of MDM2. The sequence is that of Ubiquitin domain-containing protein 1 (UBTD1) from Bos taurus (Bovine).